We begin with the raw amino-acid sequence, 658 residues long: Glycogen debranching enzyme (658 aa).

Asp-335 serves as the catalytic Nucleophile. Glu-370 acts as the Proton donor in catalysis. Over residues 457-468 (NDANGEGNRDGT) the composition is skewed to basic and acidic residues. Residues 457–481 (NDANGEGNRDGTDSNFSNNHGTEGL) form a disordered region.

It belongs to the glycosyl hydrolase 13 family.

It carries out the reaction Hydrolysis of (1-&gt;6)-alpha-D-glucosidic linkages to branches with degrees of polymerization of three or four glucose residues in limit dextrin.. Its pathway is glycan degradation; glycogen degradation. Removes maltotriose and maltotetraose chains that are attached by 1,6-alpha-linkage to the limit dextrin main chain, generating a debranched limit dextrin. The polypeptide is Glycogen debranching enzyme (Pectobacterium atrosepticum (strain SCRI 1043 / ATCC BAA-672) (Erwinia carotovora subsp. atroseptica)).